The following is a 148-amino-acid chain: Snaclec 8 (148 aa).

Positions 1 to 23 (MGRFIFVSFSLLVVFFSLSGTEA) are cleaved as a signal peptide. One can recognise a C-type lectin domain in the interval 34 to 148 (YDQNCYKAFE…DTQFRLQEPG (115 aa)).

This sequence belongs to the snaclec family. Heterodimer; disulfide-linked. In terms of processing, contains disulfide bonds. Expressed by the venom gland.

It is found in the secreted. Its function is as follows. Interferes with one step of hemostasis (modulation of platelet aggregation, or coagulation cascade, for example). The protein is Snaclec 8 of Echis carinatus sochureki (Saw-scaled viper).